A 419-amino-acid polypeptide reads, in one-letter code: Cytosine permease (419 aa).

Topologically, residues 1 to 19 are cytoplasmic; sequence MSQDNNFSQGPVPQSARKG. Residues 20–39 form a helical membrane-spanning segment; that stretch reads VLALTFVMLGLTFFSASMWT. Residues 40–51 are Periplasmic-facing; that stretch reads GGTLGTGLSYHD. The helical transmembrane segment at 52–71 threads the bilayer; it reads FFLAVLIGNLLLGIYTSFLG. Topologically, residues 72–100 are cytoplasmic; the sequence is YIGAKTGLTTHLLARFSFGVKGSWLPSLL. The chain crosses the membrane as a helical span at residues 101–120; sequence LGGTQVGWFGVGVAMFAIPV. Residues 121–127 lie on the Periplasmic side of the membrane; sequence GKATGLD. Residues 128–147 form a helical membrane-spanning segment; it reads INLLIAVSGLLMTVTVFFGI. Residues 148–152 lie on the Cytoplasmic side of the membrane; it reads SALTV. Residues 153-172 traverse the membrane as a helical segment; it reads LSLIAVPAIACLGGYSVWLA. At 173–192 the chain is on the periplasmic side; that stretch reads VNGMGGLDALKAVVPAQPLD. Residues 193–212 traverse the membrane as a helical segment; sequence FNVALALVVGSFISAGTLTA. At 213-221 the chain is on the cytoplasmic side; that stretch reads DFVRFGRNA. A helical transmembrane segment spans residues 222-242; the sequence is KLAVLVAMVAFFLGNSLMFIF. The Periplasmic segment spans residues 243 to 257; it reads GAAGAAALGMADISD. A helical membrane pass occupies residues 258-277; that stretch reads VMIAQGLLLPAIVVLGLNIW. Topologically, residues 278–300 are cytoplasmic; the sequence is TTNDNALYASGLGFANITGMSSK. A helical transmembrane segment spans residues 301–320; that stretch reads TLSVINGIIGTVCALWLYNN. Position 321 (Phe-321) is a topological domain, periplasmic. The helical transmembrane segment at 322–341 threads the bilayer; that stretch reads VGWLTFLSAAIPPVGGVIIA. Residues 342 to 358 are Cytoplasmic-facing; that stretch reads DYLMNRRRYEHFATTRM. Residues 359 to 378 traverse the membrane as a helical segment; sequence MSVNWVAILAVALGIAAGHW. Residues 379–380 are Periplasmic-facing; the sequence is LP. A helical membrane pass occupies residues 381 to 400; that stretch reads GIVPVNAVLGGALSYLILNP. Over 401–419 the chain is Cytoplasmic; it reads ILNRKTTAAMTHVEANSVE.

Belongs to the purine-cytosine permease (2.A.39) family.

It localises to the cell inner membrane. Functionally, required for cytosine transport into the cell. This Escherichia coli O157:H7 protein is Cytosine permease (codB).